The primary structure comprises 427 residues: UDP-N-acetylglucosamine 1-carboxyvinyltransferase (427 aa).

22–23 (KN) contacts phosphoenolpyruvate. A UDP-N-acetyl-alpha-D-glucosamine-binding site is contributed by Arg-99. The Proton donor role is filled by Cys-123. Residue Cys-123 is modified to 2-(S-cysteinyl)pyruvic acid O-phosphothioketal. Residues 128 to 132 (RPIDL), Asp-313, and Ile-335 contribute to the UDP-N-acetyl-alpha-D-glucosamine site.

It belongs to the EPSP synthase family. MurA subfamily.

The protein resides in the cytoplasm. It carries out the reaction phosphoenolpyruvate + UDP-N-acetyl-alpha-D-glucosamine = UDP-N-acetyl-3-O-(1-carboxyvinyl)-alpha-D-glucosamine + phosphate. It participates in cell wall biogenesis; peptidoglycan biosynthesis. In terms of biological role, cell wall formation. Adds enolpyruvyl to UDP-N-acetylglucosamine. This Novosphingobium aromaticivorans (strain ATCC 700278 / DSM 12444 / CCUG 56034 / CIP 105152 / NBRC 16084 / F199) protein is UDP-N-acetylglucosamine 1-carboxyvinyltransferase.